We begin with the raw amino-acid sequence, 481 residues long: MNYLPMMIVFPLIMAIIMNLLHGKEKAVKYITFITAAILIILPFISQYGYYYFGGHGVVNGWVSGIAYLYNPAKQAIIVTLSLIASLVLITGMGEKLKNNMFVTLSLMGFASIAAIVLADDIFNLYVFFEIVSIVQAGLVFLSGTEEAYKAGLRYMIMGNVAAALMLLGIAFLLASTGTLNITDMKHYLLVDNPMIYGGLLLLIVGLAYGAGLPPFHNVKADLYARSKGFISAMLQTYSKFVLVGLMIIILKLFNGLDYFASAHAVLIALGVLAMVFGVVMALLQSDYKKLLAYHAISQGGYVATGLALGTPLGIVAGIFHAINHVIYKSALFLGAYIVSCKRGSNLHKLGGLLPLMPSVAFMVLCAKLAISGIPPFNGFQSKWMLAQAAMQVNMPEIAIIMIIVSIGTFVSMMKAFYLIYLKPVDEETLKEYQNKEVPKLAVFSLFVLTALCIIIGLYPDIVTNYLWDYAKELGVNYYLK.

Helical transmembrane passes span 3 to 23 (YLPMMIVFPLIMAIIMNLLHG), 33 to 53 (FITAAILIILPFISQYGYYYF), 75 to 95 (QAIIVTLSLIASLVLITGMGE), 99 to 119 (NNMFVTLSLMGFASIAAIVLA), 122 to 142 (IFNLYVFFEIVSIVQAGLVFL), 155 to 175 (YMIMGNVAAALMLLGIAFLLA), 196 to 216 (IYGGLLLLIVGLAYGAGLPPF), 241 to 261 (FVLVGLMIIILKLFNGLDYFA), 264 to 284 (HAVLIALGVLAMVFGVVMALL), 303 to 323 (VATGLALGTPLGIVAGIFHAI), 351 to 371 (GGLLPLMPSVAFMVLCAKLAI), 400 to 420 (IIMIIVSIGTFVSMMKAFYLI), and 443 to 463 (VFSLFVLTALCIIIGLYPDIV).

The protein resides in the cell membrane. This is an uncharacterized protein from Methanocaldococcus jannaschii (strain ATCC 43067 / DSM 2661 / JAL-1 / JCM 10045 / NBRC 100440) (Methanococcus jannaschii).